We begin with the raw amino-acid sequence, 571 residues long: Urease subunit alpha (571 aa).

The Urease domain maps to 134 to 571 (GAIDTHIHFI…LPMAQRYFLF (438 aa)). Positions 139, 141, and 222 each coordinate Ni(2+). An N6-carboxylysine modification is found at lysine 222. Histidine 224 is a substrate binding site. Ni(2+) contacts are provided by histidine 251 and histidine 277. The active-site Proton donor is the histidine 325. Aspartate 365 contributes to the Ni(2+) binding site.

This sequence belongs to the metallo-dependent hydrolases superfamily. Urease alpha subunit family. In terms of assembly, heterotrimer of UreA (gamma), UreB (beta) and UreC (alpha) subunits. Three heterotrimers associate to form the active enzyme. Requires Ni cation as cofactor. In terms of processing, carboxylation allows a single lysine to coordinate two nickel ions.

The protein localises to the cytoplasm. The catalysed reaction is urea + 2 H2O + H(+) = hydrogencarbonate + 2 NH4(+). It functions in the pathway nitrogen metabolism; urea degradation; CO(2) and NH(3) from urea (urease route): step 1/1. This Bordetella pertussis (strain Tohama I / ATCC BAA-589 / NCTC 13251) protein is Urease subunit alpha.